Consider the following 263-residue polypeptide: Glucosamine-6-phosphate deaminase (263 aa).

The active-site Proton acceptor; for enolization step is aspartate 72. The For ring-opening step role is filled by aspartate 141. The active-site Proton acceptor; for ring-opening step is histidine 143. Glutamate 148 serves as the catalytic For ring-opening step.

It belongs to the glucosamine/galactosamine-6-phosphate isomerase family. NagB subfamily.

The enzyme catalyses alpha-D-glucosamine 6-phosphate + H2O = beta-D-fructose 6-phosphate + NH4(+). It functions in the pathway amino-sugar metabolism; N-acetylneuraminate degradation; D-fructose 6-phosphate from N-acetylneuraminate: step 5/5. Allosterically activated by N-acetylglucosamine 6-phosphate (GlcNAc6P). In terms of biological role, catalyzes the reversible isomerization-deamination of glucosamine 6-phosphate (GlcN6P) to form fructose 6-phosphate (Fru6P) and ammonium ion. The sequence is that of Glucosamine-6-phosphate deaminase from Phocaeicola vulgatus (strain ATCC 8482 / DSM 1447 / JCM 5826 / CCUG 4940 / NBRC 14291 / NCTC 11154) (Bacteroides vulgatus).